Here is a 210-residue protein sequence, read N- to C-terminus: Large ribosomal subunit protein bL25 (210 aa).

This sequence belongs to the bacterial ribosomal protein bL25 family. CTC subfamily. As to quaternary structure, part of the 50S ribosomal subunit; part of the 5S rRNA/L5/L18/L25 subcomplex. Contacts the 5S rRNA. Binds to the 5S rRNA independently of L5 and L18.

This is one of the proteins that binds to the 5S RNA in the ribosome where it forms part of the central protuberance. This chain is Large ribosomal subunit protein bL25, found in Frankia casuarinae (strain DSM 45818 / CECT 9043 / HFP020203 / CcI3).